The chain runs to 167 residues: Photosystem II extrinsic protein V (167 aa).

A signal peptide spans 1-30 (MVFKTLRRTLWLTLAALLAVFQFNLGAAQA). Heme c-binding residues include Cys67, Cys70, His71, and His122.

Belongs to the cytochrome c family. PsbV subfamily. As to quaternary structure, PSII is composed of 1 copy each of membrane proteins PsbA, PsbB, PsbC, PsbD, PsbE, PsbF, PsbH, PsbI, PsbJ, PsbK, PsbL, PsbM, PsbT, PsbX, PsbY, PsbZ, Psb30/Ycf12, peripheral proteins PsbO, CyanoQ (PsbQ), PsbU, PsbV and a large number of cofactors. It forms dimeric complexes. Heme c is required as a cofactor.

It is found in the cellular thylakoid membrane. Functionally, one of the extrinsic, lumenal subunits of photosystem II (PSII). PSII is a light-driven water plastoquinone oxidoreductase, using light energy to abstract electrons from H(2)O, generating a proton gradient subsequently used for ATP formation. The extrinsic proteins stabilize the structure of photosystem II oxygen-evolving complex (OEC), the ion environment of oxygen evolution and protect the OEC against heat-induced inactivation. Low-potential cytochrome c that plays a role in the OEC of PSII. In Synechococcus elongatus (strain ATCC 33912 / PCC 7942 / FACHB-805) (Anacystis nidulans R2), this protein is Photosystem II extrinsic protein V.